We begin with the raw amino-acid sequence, 367 residues long: D-alanine--D-alanine ligase (367 aa).

An ATP-grasp domain is found at 145-351 (KRLLRDAGLP…QPALMDALIA (207 aa)). 174–229 (HAVGCSELFIKPANLGSSVGISKARTPQEFAAACDLALRFDGKILIERCISPVREI) contacts ATP. Mg(2+)-binding residues include D306, E318, and N320.

This sequence belongs to the D-alanine--D-alanine ligase family. Requires Mg(2+) as cofactor. The cofactor is Mn(2+).

The protein resides in the cytoplasm. It carries out the reaction 2 D-alanine + ATP = D-alanyl-D-alanine + ADP + phosphate + H(+). The protein operates within cell wall biogenesis; peptidoglycan biosynthesis. In terms of biological role, cell wall formation. This Bradyrhizobium sp. (strain BTAi1 / ATCC BAA-1182) protein is D-alanine--D-alanine ligase.